The primary structure comprises 514 residues: 2,3-bisphosphoglycerate-independent phosphoglycerate mutase (514 aa).

Residues aspartate 14 and serine 64 each coordinate Mn(2+). The Phosphoserine intermediate role is filled by serine 64. Substrate contacts are provided by residues histidine 125, 155–156 (RD), arginine 187, arginine 193, 263–266 (RADR), and lysine 336. Mn(2+) contacts are provided by aspartate 403, histidine 407, aspartate 444, histidine 445, and histidine 463.

It belongs to the BPG-independent phosphoglycerate mutase family. Monomer. Mn(2+) serves as cofactor.

The enzyme catalyses (2R)-2-phosphoglycerate = (2R)-3-phosphoglycerate. The protein operates within carbohydrate degradation; glycolysis; pyruvate from D-glyceraldehyde 3-phosphate: step 3/5. Functionally, catalyzes the interconversion of 2-phosphoglycerate and 3-phosphoglycerate. The sequence is that of 2,3-bisphosphoglycerate-independent phosphoglycerate mutase from Salmonella typhi.